An 882-amino-acid chain; its full sequence is Putative HTH-type transcriptional regulator Rv0890c (882 aa).

Positions 814–879 constitute an HTH luxR-type domain; the sequence is PARGWGSLTP…QLVDEAARRG (66 aa). The segment at residues 838–857 is a DNA-binding region (H-T-H motif); it reads NKDIAKRLFVSPRTVQTHLT.

This Mycobacterium tuberculosis (strain ATCC 25618 / H37Rv) protein is Putative HTH-type transcriptional regulator Rv0890c.